Reading from the N-terminus, the 67-residue chain is Beta-defensin 103A (67 aa).

The N-terminal stretch at 1–22 (MRIHYLLFALLFLFLVPVPGHG) is a signal peptide. Intrachain disulfides connect C33–C62, C40–C55, and C45–C63.

This sequence belongs to the beta-defensin family.

The protein resides in the secreted. In terms of biological role, exhibits antimicrobial activity against Gram-positive and Gram-negative bacteria. This Pan troglodytes (Chimpanzee) protein is Beta-defensin 103A (DEFB103A).